We begin with the raw amino-acid sequence, 194 residues long: tRNA (mnm(5)s(2)U34)-methyltransferase (194 aa).

Histidine 33, aspartate 34, aspartate 52, glutamine 54, serine 79, and histidine 80 together coordinate S-adenosyl-L-methionine.

The protein belongs to the methyltransferase superfamily. MnmM family. As to quaternary structure, homodimer.

It catalyses the reaction 5-aminomethyl-2-thiouridine(34) in tRNA + S-adenosyl-L-methionine = 5-methylaminomethyl-2-thiouridine(34) in tRNA + S-adenosyl-L-homocysteine + H(+). Its pathway is tRNA modification. In terms of biological role, involved in the biosynthesis of 5-methylaminomethyl-2-thiouridine (mnm(5)s(2)U) at the wobble position (U34) in tRNA. Catalyzes the transfer of a methyl group from S-adenosyl-L-methionine to nm(5)s(2)U34 to form mnm(5)s(2)U34. In Bacillus subtilis (strain 168), this protein is tRNA (mnm(5)s(2)U34)-methyltransferase.